The following is a 393-amino-acid chain: uncharacterized protein (393 aa).

A B box-type zinc finger spans residues 6 to 47 (KYDNKCAIHKEHKIKMICATCKDVVCNECILLDHNGHKFGRI). Cysteine 11, histidine 14, cysteine 34, and histidine 39 together coordinate Zn(2+).

This is an uncharacterized protein from Dictyostelium discoideum (Social amoeba).